Consider the following 562-residue polypeptide: UPF0649 protein C1442.02 (562 aa).

Residues Ser-285 and Ser-286 each carry the phosphoserine modification. The disordered stretch occupies residues 288 to 308 (DEEIAKNADVPAEVDNNSTKA).

Belongs to the UPF0649 family.

It localises to the cytoplasm. The protein resides in the nucleus. The polypeptide is UPF0649 protein C1442.02 (Schizosaccharomyces pombe (strain 972 / ATCC 24843) (Fission yeast)).